The sequence spans 202 residues: Large ribosomal subunit protein bL25 (202 aa).

The disordered stretch occupies residues 1 to 21 (MSKESYELKAEARERVGKGSS).

Belongs to the bacterial ribosomal protein bL25 family. CTC subfamily. Part of the 50S ribosomal subunit; part of the 5S rRNA/L5/L18/L25 subcomplex. Contacts the 5S rRNA. Binds to the 5S rRNA independently of L5 and L18.

This is one of the proteins that binds to the 5S RNA in the ribosome where it forms part of the central protuberance. The polypeptide is Large ribosomal subunit protein bL25 (Agrobacterium fabrum (strain C58 / ATCC 33970) (Agrobacterium tumefaciens (strain C58))).